The sequence spans 155 residues: Transcriptional repressor NrdR (155 aa).

Positions M1 to S10 are enriched in basic residues. The interval M1–G21 is disordered. Residues C3–C34 fold into a zinc finger. Positions L49 to V139 constitute an ATP-cone domain.

This sequence belongs to the NrdR family. Requires Zn(2+) as cofactor.

Functionally, negatively regulates transcription of bacterial ribonucleotide reductase nrd genes and operons by binding to NrdR-boxes. The protein is Transcriptional repressor NrdR of Lacticaseibacillus casei (strain BL23) (Lactobacillus casei).